The following is a 347-amino-acid chain: Ribosomal RNA small subunit methyltransferase H (347 aa).

Residues 47–49, D64, F91, D114, and Q121 each bind S-adenosyl-L-methionine; that span reads GGY. Residues 291 to 347 are disordered; the sequence is PAVKGAVGPTAEEEERNPRARSAKLRAGIRTENPPLEDDLSLFGLPKLPETNELARS.

It belongs to the methyltransferase superfamily. RsmH family.

It is found in the cytoplasm. The enzyme catalyses cytidine(1402) in 16S rRNA + S-adenosyl-L-methionine = N(4)-methylcytidine(1402) in 16S rRNA + S-adenosyl-L-homocysteine + H(+). Specifically methylates the N4 position of cytidine in position 1402 (C1402) of 16S rRNA. The protein is Ribosomal RNA small subunit methyltransferase H of Brucella anthropi (strain ATCC 49188 / DSM 6882 / CCUG 24695 / JCM 21032 / LMG 3331 / NBRC 15819 / NCTC 12168 / Alc 37) (Ochrobactrum anthropi).